A 207-amino-acid polypeptide reads, in one-letter code: Small ribosomal subunit protein uS4 (207 aa).

An S4 RNA-binding domain is found at 97–159 (SRLDNVCYRM…AKSQLRIQAA (63 aa)).

This sequence belongs to the universal ribosomal protein uS4 family. In terms of assembly, part of the 30S ribosomal subunit. Contacts protein S5. The interaction surface between S4 and S5 is involved in control of translational fidelity.

In terms of biological role, one of the primary rRNA binding proteins, it binds directly to 16S rRNA where it nucleates assembly of the body of the 30S subunit. Functionally, with S5 and S12 plays an important role in translational accuracy. The chain is Small ribosomal subunit protein uS4 from Halorhodospira halophila (strain DSM 244 / SL1) (Ectothiorhodospira halophila (strain DSM 244 / SL1)).